Reading from the N-terminus, the 268-residue chain is Indole-3-glycerol phosphate synthase (268 aa).

It belongs to the TrpC family.

It carries out the reaction 1-(2-carboxyphenylamino)-1-deoxy-D-ribulose 5-phosphate + H(+) = (1S,2R)-1-C-(indol-3-yl)glycerol 3-phosphate + CO2 + H2O. It functions in the pathway amino-acid biosynthesis; L-tryptophan biosynthesis; L-tryptophan from chorismate: step 4/5. The sequence is that of Indole-3-glycerol phosphate synthase from Parafrankia sp. (strain EAN1pec).